The sequence spans 292 residues: ATP synthase gamma chain (292 aa).

The protein belongs to the ATPase gamma chain family. In terms of assembly, F-type ATPases have 2 components, CF(1) - the catalytic core - and CF(0) - the membrane proton channel. CF(1) has five subunits: alpha(3), beta(3), gamma(1), delta(1), epsilon(1). CF(0) has three main subunits: a, b and c.

It localises to the cell membrane. Produces ATP from ADP in the presence of a proton gradient across the membrane. The gamma chain is believed to be important in regulating ATPase activity and the flow of protons through the CF(0) complex. This chain is ATP synthase gamma chain, found in Prosthecochloris aestuarii (strain DSM 271 / SK 413).